The chain runs to 347 residues: Protein RecA (347 aa).

Residue 67–74 (GPESSGKT) participates in ATP binding. The tract at residues 327-347 (ALGLSSPTPKENGKEKGKAKP) is disordered. Residues 337–347 (ENGKEKGKAKP) are compositionally biased toward basic and acidic residues.

This sequence belongs to the RecA family.

Its subcellular location is the cytoplasm. Can catalyze the hydrolysis of ATP in the presence of single-stranded DNA, the ATP-dependent uptake of single-stranded DNA by duplex DNA, and the ATP-dependent hybridization of homologous single-stranded DNAs. It interacts with LexA causing its activation and leading to its autocatalytic cleavage. The sequence is that of Protein RecA from Desulforapulum autotrophicum (strain ATCC 43914 / DSM 3382 / VKM B-1955 / HRM2) (Desulfobacterium autotrophicum).